We begin with the raw amino-acid sequence, 192 residues long: Ribose 1,5-bisphosphate phosphokinase PhnN (192 aa).

It belongs to the ribose 1,5-bisphosphokinase family.

The enzyme catalyses alpha-D-ribose 1,5-bisphosphate + ATP = 5-phospho-alpha-D-ribose 1-diphosphate + ADP. The protein operates within metabolic intermediate biosynthesis; 5-phospho-alpha-D-ribose 1-diphosphate biosynthesis; 5-phospho-alpha-D-ribose 1-diphosphate from D-ribose 5-phosphate (route II): step 3/3. Functionally, catalyzes the phosphorylation of ribose 1,5-bisphosphate to 5-phospho-D-ribosyl alpha-1-diphosphate (PRPP). In Achromobacter xylosoxidans (strain A8), this protein is Ribose 1,5-bisphosphate phosphokinase PhnN.